The sequence spans 504 residues: Maturase K (504 aa).

This sequence belongs to the intron maturase 2 family. MatK subfamily.

It is found in the plastid. It localises to the chloroplast. In terms of biological role, usually encoded in the trnK tRNA gene intron. Probably assists in splicing its own and other chloroplast group II introns. The protein is Maturase K of Hamamelis mollis (Chinese witch hazel).